The following is a 71-amino-acid chain: MFTLKKSLLLLFFLGTINLSLCEQERDADEEERRDDSEERDIEVEKRFLPLIASVAANLVPKIFCKITKKC.

The first 22 residues, 1–22, serve as a signal peptide directing secretion; it reads MFTLKKSLLLLFFLGTINLSLC. A propeptide spanning residues 23 to 45 is cleaved from the precursor; that stretch reads EQERDADEEERRDDSEERDIEVE. A disulfide bond links cysteine 65 and cysteine 71.

Belongs to the frog skin active peptide (FSAP) family. Brevinin subfamily. Expressed by the skin glands.

The protein localises to the secreted. Its function is as follows. Has antimicrobial activity against Gram-positive bacteria and fungi but has weak or no activity against a range of Gram-negative bacteria except P.faecalis. Active against the Gram-positive bacteria E.faecium 091299 (MIC=37.5 uM), S.aureus ATCC 25923 (MIC=2.4 uM), S.carnosus KHS (MIC=19 uM), B.licheniformis X39 (MIC=2.4 uM) and R.rhodochrous X15 (MIC=1.2 uM) and a lower activity against E.faecalis 981 (MIC=75 uM). Active against the Gram-negative bacterium P.faecalis X29 (MIC=9.5 uM) is virtually inactive against E.coli ATCC 25922 (MIC=150 uM), and inactive against P.aeruginosa and S.typhi. Has antifungal activity against C.albicans ATCC 2002 (MIC=9.5 uM) and is also active against the slime mold 090223 (MIC=1.2 uM). Has low hemolytic activity against human erythrocytes (LC(50)=75 uM). This Odorrana hainanensis (Odor frog) protein is Brevinin-1V.